Consider the following 954-residue polypeptide: Zinc finger protein 618 (954 aa).

Met-1 is subject to N-acetylmethionine. Residues 1–19 (MNQPGGAAAPQADGASAAG) show a composition bias toward low complexity. The segment at 1–56 (MNQPGGAAAPQADGASAAGRKSTASRERLKRSQKSTKVEGPEPVPAEASLSAEQGT) is disordered. Glycyl lysine isopeptide (Lys-Gly) (interchain with G-Cter in SUMO2) cross-links involve residues Lys-63 and Lys-81. 2 C2H2-type zinc fingers span residues 147–169 (YECG…VRAH) and 188–210 (YTCD…RDLH). Residue Lys-239 forms a Glycyl lysine isopeptide (Lys-Gly) (interchain with G-Cter in SUMO2) linkage. The C2H2-type 3 zinc-finger motif lies at 256–278 (YTCEFCGKQYKYYTPYQEHVALH). Disordered regions lie at residues 282–307 (STAP…VSPS) and 337–390 (RTPP…NSSE). Polar residues predominate over residues 340-357 (PATQTQTFRTPNSGSPAS). A compositionally biased stretch (basic and acidic residues) spans 366–380 (FSRRVEGKAQNHFEE). The C2H2-type 4 zinc finger occupies 392–414 (YTCGACGIQFQFYNNLLEHMQSH). The tract at residues 421–463 (NIASNQSRSPPAVVEEKWKPQAQRNSANNTTTSGLTPNSMIPE) is disordered. A Glycyl lysine isopeptide (Lys-Gly) (interchain with G-Cter in SUMO2) cross-link involves residue Lys-437. Positions 442-459 (AQRNSANNTTTSGLTPNS) are enriched in polar residues.

The protein belongs to the krueppel C2H2-type zinc-finger protein family. In terms of assembly, interacts with UHRF2.

It localises to the nucleus. The protein resides in the chromosome. Regulates UHRF2 function as a specific 5-hydroxymethylcytosine (5hmC) reader by regulating its chromatin localization. The chain is Zinc finger protein 618 (ZNF618) from Homo sapiens (Human).